A 502-amino-acid chain; its full sequence is NAD(P)H-quinone oxidoreductase chain 4, chloroplastic (502 aa).

14 helical membrane-spanning segments follow: residues 4-24 (FPWLTVIVVLPISAGSSIFFV), 37-57 (YTICICLLEILLTTYAFCYHF), 86-106 (GLSIGPILLTGFITTLATLAA), 113-131 (SRLFHFLMLAMYSGQVGSF), 136-156 (LLLFFLMWELELIPVYLLLSM), 169-189 (FILYTAGGSIFLLMGVSGMGL), 210-230 (GLEIIFYFGFLIAYAVKSPII), 244-264 (HYSTCMLLAGILLKMGAYGLV), 274-294 (AHSIFSPWLVIVGAIQIIYAA), 307-327 (IAYSSVSHMGFTLIGIGSITD), 332-352 (GAILQIISHGFIGAALFFLAG), 388-408 (LALPGMSGFVAELVVFFGIIT), 418-438 (IVISFVMAIGMILTPIYSLSM), and 464-484 (LFVSICIFLPVVGIGIYPDFV).

The protein belongs to the complex I subunit 4 family.

Its subcellular location is the plastid. The protein localises to the chloroplast thylakoid membrane. It catalyses the reaction a plastoquinone + NADH + (n+1) H(+)(in) = a plastoquinol + NAD(+) + n H(+)(out). It carries out the reaction a plastoquinone + NADPH + (n+1) H(+)(in) = a plastoquinol + NADP(+) + n H(+)(out). This Calycanthus floridus var. glaucus (Eastern sweetshrub) protein is NAD(P)H-quinone oxidoreductase chain 4, chloroplastic.